Here is a 184-residue protein sequence, read N- to C-terminus: Small ribosomal subunit protein uS4 (184 aa).

The region spanning 108–172 is the S4 RNA-binding domain; it reads RRLQTQVHRL…SPMTKESHPE (65 aa). The segment at 163 to 184 is disordered; it reads SPMTKESHPERPAQIAASVVEE.

Belongs to the universal ribosomal protein uS4 family. In terms of assembly, part of the 30S ribosomal subunit. Contacts protein S5. The interaction surface between S4 and S5 is involved in control of translational fidelity.

Its function is as follows. One of the primary rRNA binding proteins, it binds directly to 16S rRNA where it nucleates assembly of the body of the 30S subunit. In terms of biological role, with S5 and S12 plays an important role in translational accuracy. The chain is Small ribosomal subunit protein uS4 from Methanococcoides burtonii (strain DSM 6242 / NBRC 107633 / OCM 468 / ACE-M).